The chain runs to 316 residues: CD276 antigen (316 aa).

The first 28 residues, 1–28, serve as a signal peptide directing secretion; it reads MLRGWGGPSVGVCVRTALGVLCLCLTGA. The Ig-like V-type domain occupies 29 to 139; that stretch reads VEVQVSEDPV…DSAAVSLQVA (111 aa). The Extracellular segment spans residues 29-248; that stretch reads VEVQVSEDPV…GQPLTFPPEA (220 aa). Residues N104, N189, and N215 are each glycosylated (N-linked (GlcNAc...) asparagine). The 94-residue stretch at 145–238 folds into the Ig-like C2-type domain; the sequence is PSMTLEPNKD…QDAHGSVTIT (94 aa). Cysteines 165 and 220 form a disulfide. The helical transmembrane segment at 249 to 269 threads the bilayer; that stretch reads LWVTVGLSVCLVVLLVALAFV. At 270–316 the chain is on the cytoplasmic side; sequence CWRKIKQSCEEENAGAEDQDGDGEGSKTALRPLKPSENKEDDGQEIA. Positions 280–292 are enriched in acidic residues; sequence EENAGAEDQDGDG. The segment at 280-316 is disordered; the sequence is EENAGAEDQDGDGEGSKTALRPLKPSENKEDDGQEIA.

This sequence belongs to the immunoglobulin superfamily. BTN/MOG family. Interacts with TREML2 and this interaction enhances T-cell activation. As to expression, ubiquitous.

It is found in the membrane. Its function is as follows. Modulates T-cell-mediated immune responses and the development of acute and chronic transplant rejection. Plays a positive regulatory role in bone formation and has a dual role in the bone-immune interface. Induces antitumor immunity as it activates both acquired and innate immunity leading to natural killer cell and CD8 T-cell dependent killing of tumor cells. In Mus musculus (Mouse), this protein is CD276 antigen (Cd276).